A 500-amino-acid polypeptide reads, in one-letter code: Probable malate:quinone oxidoreductase (500 aa).

The protein belongs to the MQO family. Requires FAD as cofactor.

It carries out the reaction (S)-malate + a quinone = a quinol + oxaloacetate. It participates in carbohydrate metabolism; tricarboxylic acid cycle; oxaloacetate from (S)-malate (quinone route): step 1/1. The sequence is that of Probable malate:quinone oxidoreductase from Halalkalibacterium halodurans (strain ATCC BAA-125 / DSM 18197 / FERM 7344 / JCM 9153 / C-125) (Bacillus halodurans).